The following is a 380-amino-acid chain: Succinyl-diaminopimelate desuccinylase (380 aa).

Histidine 69 contacts Zn(2+). Aspartate 71 is a catalytic residue. Aspartate 102 serves as a coordination point for Zn(2+). Glutamate 135 serves as the catalytic Proton acceptor. Glutamate 136, glutamate 164, and histidine 353 together coordinate Zn(2+).

Belongs to the peptidase M20A family. DapE subfamily. Homodimer. It depends on Zn(2+) as a cofactor. Requires Co(2+) as cofactor.

The catalysed reaction is N-succinyl-(2S,6S)-2,6-diaminopimelate + H2O = (2S,6S)-2,6-diaminopimelate + succinate. The protein operates within amino-acid biosynthesis; L-lysine biosynthesis via DAP pathway; LL-2,6-diaminopimelate from (S)-tetrahydrodipicolinate (succinylase route): step 3/3. In terms of biological role, catalyzes the hydrolysis of N-succinyl-L,L-diaminopimelic acid (SDAP), forming succinate and LL-2,6-diaminopimelate (DAP), an intermediate involved in the bacterial biosynthesis of lysine and meso-diaminopimelic acid, an essential component of bacterial cell walls. The chain is Succinyl-diaminopimelate desuccinylase from Cereibacter sphaeroides (strain KD131 / KCTC 12085) (Rhodobacter sphaeroides).